The primary structure comprises 922 residues: Translation initiation factor IF-2 (922 aa).

The disordered stretch occupies residues 33–310; it reads KTASSTVQPP…SKRQKRNEYE (278 aa). Residues 75–87 are compositionally biased toward low complexity; it reads PAAKAAPKAAAKP. Pro residues-rich tracts occupy residues 88–98 and 140–150; these read GPKPGPKPGPQ and TPKPGAKPGPK. 2 stretches are compositionally biased toward low complexity: residues 151 to 169 and 202 to 211; these read PGGAKPGAKPGPKPGGRAP and PGSRPGGAKK. 2 stretches are compositionally biased toward gly residues: residues 215 to 225 and 248 to 292; these read KPGGAKQGGGR and FGGG…GRPG. The span at 296 to 305 shows a compositional bias: basic residues; the sequence is RKGRKSKRQK. Residues 418-590 form the tr-type G domain; that stretch reads QRPPVVTVMG…VLLTADASLD (173 aa). Residues 427-434 are G1; sequence GHVDHGKT. Residue 427–434 participates in GTP binding; it reads GHVDHGKT. Positions 452 to 456 are G2; the sequence is GITQH. Residues 477–480 form a G3 region; sequence DTPG. GTP is bound by residues 477–481 and 531–534; these read DTPGH and NKID. The G4 stretch occupies residues 531–534; sequence NKID. The segment at 567–569 is G5; sequence SAK.

This sequence belongs to the TRAFAC class translation factor GTPase superfamily. Classic translation factor GTPase family. IF-2 subfamily.

Its subcellular location is the cytoplasm. Functionally, one of the essential components for the initiation of protein synthesis. Protects formylmethionyl-tRNA from spontaneous hydrolysis and promotes its binding to the 30S ribosomal subunits. Also involved in the hydrolysis of GTP during the formation of the 70S ribosomal complex. The protein is Translation initiation factor IF-2 of Corynebacterium jeikeium (strain K411).